The following is a 43-amino-acid chain: Delta/kappa-actitoxin-Avd4a (43 aa).

Intrachain disulfides connect Cys-4-Cys-39, Cys-6-Cys-32, and Cys-22-Cys-40.

This sequence belongs to the sea anemone type 3 (BDS) potassium channel toxin family.

It localises to the secreted. Its subcellular location is the nematocyst. Acts as a gating modifier on both Kv and Nav ion channels, and also acts on blood pressure. Voltage-dependently inhibits voltage-gated potassium channels Kv3 (Kv3.1/KCNC1, Kv3.2/KCNC2 and Kv3.4/KCNC4) and slows inactivation of the voltage-gated sodium channel Nav1.7/SCN9A. Inhibits all Kv3.1, Kv3.2 and Kv3.4 by about 50% when tested at a voltage of +40 mV (45%, 48% and 56%, respectively). May act by binding residues in voltage-sensing domains S3b and S4 of Kv3. On sodium channel, tests have been done on human Nav1.7/SCN9A (expressed in HEK293 cells) (EC(50)=3 nM) and rat SCG neurons that mostly carry Nav1.7 channels (EC(50)=300 nM). This toxin also reduces blood pressure. The protein is Delta/kappa-actitoxin-Avd4a of Anemonia sulcata (Mediterranean snakelocks sea anemone).